Consider the following 1044-residue polypeptide: Isoleucine--tRNA ligase (1044 aa).

Residues 49–59 (PYCSGRIHLGT) carry the 'HIGH' region motif. A 'KMSKS' region motif is present at residues 591–595 (KMSKS). ATP is bound at residue lysine 594.

It belongs to the class-I aminoacyl-tRNA synthetase family. IleS type 2 subfamily. As to quaternary structure, monomer. Zn(2+) is required as a cofactor.

Its subcellular location is the cytoplasm. It catalyses the reaction tRNA(Ile) + L-isoleucine + ATP = L-isoleucyl-tRNA(Ile) + AMP + diphosphate. Functionally, catalyzes the attachment of isoleucine to tRNA(Ile). As IleRS can inadvertently accommodate and process structurally similar amino acids such as valine, to avoid such errors it has two additional distinct tRNA(Ile)-dependent editing activities. One activity is designated as 'pretransfer' editing and involves the hydrolysis of activated Val-AMP. The other activity is designated 'posttransfer' editing and involves deacylation of mischarged Val-tRNA(Ile). The sequence is that of Isoleucine--tRNA ligase from Methanothermobacter thermautotrophicus (strain ATCC 29096 / DSM 1053 / JCM 10044 / NBRC 100330 / Delta H) (Methanobacterium thermoautotrophicum).